The chain runs to 288 residues: Shikimate dehydrogenase (NADP(+)) (288 aa).

Shikimate-binding positions include serine 21–serine 23 and threonine 68. The Proton acceptor role is filled by lysine 72. Glutamate 84 serves as a coordination point for NADP(+). The shikimate site is built by asparagine 93 and aspartate 108. NADP(+) is bound by residues glycine 132–alanine 136 and leucine 230. Tyrosine 232 is a shikimate binding site. Glycine 253 lines the NADP(+) pocket.

Belongs to the shikimate dehydrogenase family. Homodimer.

It carries out the reaction shikimate + NADP(+) = 3-dehydroshikimate + NADPH + H(+). The protein operates within metabolic intermediate biosynthesis; chorismate biosynthesis; chorismate from D-erythrose 4-phosphate and phosphoenolpyruvate: step 4/7. Involved in the biosynthesis of the chorismate, which leads to the biosynthesis of aromatic amino acids. Catalyzes the reversible NADPH linked reduction of 3-dehydroshikimate (DHSA) to yield shikimate (SA). The protein is Shikimate dehydrogenase (NADP(+)) of Gloeothece citriformis (strain PCC 7424) (Cyanothece sp. (strain PCC 7424)).